The chain runs to 361 residues: 3-dehydroquinate synthase (361 aa).

NAD(+) contacts are provided by residues 71 to 76, 105 to 109, 129 to 130, Lys142, Lys151, and 169 to 172; these read DGEQFK, GVIGD, TT, and CLQT. 3 residues coordinate Zn(2+): Glu184, His247, and His264.

This sequence belongs to the sugar phosphate cyclases superfamily. Dehydroquinate synthase family. Co(2+) is required as a cofactor. Zn(2+) serves as cofactor. Requires NAD(+) as cofactor.

It localises to the cytoplasm. The catalysed reaction is 7-phospho-2-dehydro-3-deoxy-D-arabino-heptonate = 3-dehydroquinate + phosphate. It participates in metabolic intermediate biosynthesis; chorismate biosynthesis; chorismate from D-erythrose 4-phosphate and phosphoenolpyruvate: step 2/7. Catalyzes the conversion of 3-deoxy-D-arabino-heptulosonate 7-phosphate (DAHP) to dehydroquinate (DHQ). This is 3-dehydroquinate synthase from Edwardsiella ictaluri (strain 93-146).